A 255-amino-acid chain; its full sequence is Putative cysteine-rich repeat secretory protein 13 (255 aa).

The N-terminal stretch at 1 to 21 (MSSNILAMVAMQLLLIRIVSS) is a signal peptide. 2 consecutive Gnk2-homologous domains span residues 28–136 (YLNH…SVNT) and 142–252 (YDSF…LYPF).

Belongs to the cysteine-rich repeat secretory protein family.

Its subcellular location is the secreted. The polypeptide is Putative cysteine-rich repeat secretory protein 13 (CRRSP13) (Arabidopsis thaliana (Mouse-ear cress)).